The following is a 241-amino-acid chain: Antimicrobial ginkbilobin-2-like protein (241 aa).

The first 23 residues, 1–23, serve as a signal peptide directing secretion; sequence MLSSKYISVSFLLLSLSLHAVNC. Gnk2-homologous domains lie at 25-127 and 133-238; these read DPLY…NIDF and NKNK…LYPF. Intrachain disulfides connect Cys-81-Cys-90, Cys-93-Cys-118, Cys-192-Cys-201, and Cys-204-Cys-229. Asn-89 is a glycosylation site (N-linked (GlcNAc...) asparagine).

This sequence belongs to the cysteine-rich repeat secretory protein family.

The protein localises to the secreted. In terms of biological role, possesses antimicrobial activity toward the oomycete Phytophthora cinnamomi (ink disease agent), thus reducing its growth rate and confering an increased resistance to the plant. This is Antimicrobial ginkbilobin-2-like protein from Castanea crenata (Japanese chestnut).